The sequence spans 547 residues: Rho GTPase-activating protein 36 (547 aa).

Residues 1–40 form the signal peptide; it reads MGGCNPFLKAARTLCPRIMPPLLFLSAFIFLVNVLGGAPG. In terms of domain architecture, Rho-GAP spans 226–426; sequence MSLNPIAKQI…AMIDNWDILF (201 aa). The disordered stretch occupies residues 493–547; that stretch reads FDEGSSEEPAVPPGTAHSHDDEEGAGNPPIPEQDRPLLRVPREKQAKTGIGYFFP. The span at 524-538 shows a compositional bias: basic and acidic residues; sequence EQDRPLLRVPREKQA.

Functionally, GTPase activator for the Rho-type GTPases by converting them to an inactive GDP-bound state. The sequence is that of Rho GTPase-activating protein 36 (ARHGAP36) from Ailuropoda melanoleuca (Giant panda).